A 262-amino-acid chain; its full sequence is Small ribosomal subunit protein uS2 (262 aa).

The interval 228-262 (VSNEEVAAEQNIDLDESKEATEAETTEENTSVESN) is disordered.

This sequence belongs to the universal ribosomal protein uS2 family.

The chain is Small ribosomal subunit protein uS2 from Staphylococcus saprophyticus subsp. saprophyticus (strain ATCC 15305 / DSM 20229 / NCIMB 8711 / NCTC 7292 / S-41).